The sequence spans 476 residues: Glutamate--tRNA ligase (476 aa).

The 'HIGH' region motif lies at 9 to 19 (PSPTGLFHIGT). A 'KMSKS' region motif is present at residues 248-252 (KLSKR). Lys251 is a binding site for ATP.

It belongs to the class-I aminoacyl-tRNA synthetase family. Glutamate--tRNA ligase type 1 subfamily. In terms of assembly, monomer.

The protein localises to the cytoplasm. It carries out the reaction tRNA(Glu) + L-glutamate + ATP = L-glutamyl-tRNA(Glu) + AMP + diphosphate. Functionally, catalyzes the attachment of glutamate to tRNA(Glu) in a two-step reaction: glutamate is first activated by ATP to form Glu-AMP and then transferred to the acceptor end of tRNA(Glu). The chain is Glutamate--tRNA ligase from Prochlorococcus marinus (strain AS9601).